The primary structure comprises 263 residues: Endonuclease 8 (263 aa).

Pro-2 (schiff-base intermediate with DNA) is an active-site residue. Glu-3 functions as the Proton donor in the catalytic mechanism. Lys-53 acts as the Proton donor; for beta-elimination activity in catalysis. Residues Gln-70, Arg-125, and Asn-169 each contribute to the DNA site. The FPG-type zinc-finger motif lies at 229-263 (KVFHRDGERCERCGGVIEKTTLSSRPFYWCPGCQH). Residue Arg-253 is the Proton donor; for delta-elimination activity of the active site.

Belongs to the FPG family. Zn(2+) serves as cofactor.

It catalyses the reaction 2'-deoxyribonucleotide-(2'-deoxyribose 5'-phosphate)-2'-deoxyribonucleotide-DNA = a 3'-end 2'-deoxyribonucleotide-(2,3-dehydro-2,3-deoxyribose 5'-phosphate)-DNA + a 5'-end 5'-phospho-2'-deoxyribonucleoside-DNA + H(+). Involved in base excision repair of DNA damaged by oxidation or by mutagenic agents. Acts as a DNA glycosylase that recognizes and removes damaged bases. Has a preference for oxidized pyrimidines, such as thymine glycol, 5,6-dihydrouracil and 5,6-dihydrothymine. Has AP (apurinic/apyrimidinic) lyase activity and introduces nicks in the DNA strand. Cleaves the DNA backbone by beta-delta elimination to generate a single-strand break at the site of the removed base with both 3'- and 5'-phosphates. The protein is Endonuclease 8 of Klebsiella pneumoniae (strain 342).